A 327-amino-acid polypeptide reads, in one-letter code: Methionyl-tRNA formyltransferase (327 aa).

118–121 (SLLP) contacts (6S)-5,6,7,8-tetrahydrofolate.

It belongs to the Fmt family.

It catalyses the reaction L-methionyl-tRNA(fMet) + (6R)-10-formyltetrahydrofolate = N-formyl-L-methionyl-tRNA(fMet) + (6S)-5,6,7,8-tetrahydrofolate + H(+). Functionally, attaches a formyl group to the free amino group of methionyl-tRNA(fMet). The formyl group appears to play a dual role in the initiator identity of N-formylmethionyl-tRNA by promoting its recognition by IF2 and preventing the misappropriation of this tRNA by the elongation apparatus. This chain is Methionyl-tRNA formyltransferase, found in Corynebacterium jeikeium (strain K411).